A 134-amino-acid polypeptide reads, in one-letter code: MIIGLGSDLIDIRRVEKSIERFGERFTHRCFTDIERAKSDGRKNRAASYAKRFAAKEACSKALGTGLANGVFWKDMGVVNLPGGKPTMILTNGAGARLAAMLPAGHRANIHLTITDDFPYAQAFVIIEALPVNG.

Mg(2+) contacts are provided by Asp8 and Glu57.

It belongs to the P-Pant transferase superfamily. AcpS family. Requires Mg(2+) as cofactor.

The protein resides in the cytoplasm. It carries out the reaction apo-[ACP] + CoA = holo-[ACP] + adenosine 3',5'-bisphosphate + H(+). Its function is as follows. Transfers the 4'-phosphopantetheine moiety from coenzyme A to a Ser of acyl-carrier-protein. The sequence is that of Holo-[acyl-carrier-protein] synthase from Agrobacterium fabrum (strain C58 / ATCC 33970) (Agrobacterium tumefaciens (strain C58)).